A 354-amino-acid chain; its full sequence is Regulatory protein RapD (354 aa).

TPR repeat units lie at residues 64–105 (FENQ…VKTA), 107–126 (KHAV…IHNT), 130–163 (ADLY…YLHQ), 171–204 (ITCK…TQQL), 211–244 (CHAY…QEFE), and 321–353 (IEAW…FIMR).

The protein belongs to the Rap family.

The protein resides in the cytoplasm. The sequence is that of Regulatory protein RapD (rapD) from Bacillus subtilis (strain 168).